The chain runs to 154 residues: Deoxyuridine 5'-triphosphate nucleotidohydrolase (154 aa).

Residues Arg64 to Gly66, Asn77, Thr81 to Asp83, and Lys91 contribute to the substrate site.

It belongs to the dUTPase family. In terms of assembly, homotrimer. Mg(2+) serves as cofactor.

It catalyses the reaction dUTP + H2O = dUMP + diphosphate + H(+). Its pathway is pyrimidine metabolism; dUMP biosynthesis; dUMP from dCTP (dUTP route): step 2/2. This enzyme is involved in nucleotide metabolism: it produces dUMP, the immediate precursor of thymidine nucleotides and it decreases the intracellular concentration of dUTP so that uracil cannot be incorporated into DNA. The chain is Deoxyuridine 5'-triphosphate nucleotidohydrolase from Mycobacterium leprae (strain Br4923).